A 704-amino-acid chain; its full sequence is Capsule polysaccharide modification protein LipA (704 aa).

The protein localises to the cell inner membrane. Functionally, involved in the phospholipid modification of the capsular polysaccharide, a strong requirement for its translocation to the cell surface. This Neisseria meningitidis serogroup A / serotype 4A (strain DSM 15465 / Z2491) protein is Capsule polysaccharide modification protein LipA (lipA).